A 217-amino-acid chain; its full sequence is Ras-related protein RABA2d (217 aa).

Residue 19-26 (GDSGVGKT) coordinates GTP. An Effector region motif is present at residues 41–49 (SKSTIGVEF). GTP-binding positions include 67–71 (DTAGQ), 125–128 (NKAD), and 155–156 (SA). The interval 196–217 (GQGTTINVEDTSGAGKRGCCST) is disordered. S-geranylgeranyl cysteine attachment occurs at residues C214 and C215.

It belongs to the small GTPase superfamily. Rab family. Expressed in root tips.

It is found in the endosome membrane. The protein resides in the golgi apparatus. The protein localises to the trans-Golgi network membrane. Intracellular vesicle trafficking and protein transport. The chain is Ras-related protein RABA2d (RABA2D) from Arabidopsis thaliana (Mouse-ear cress).